The chain runs to 527 residues: FAD-dependent monooxygenase CTB5 (527 aa).

Residues 78–255 (SDLHPSCIAL…TAVTLKTFGQ (178 aa)) enclose the FAD-binding PCMH-type domain.

It belongs to the oxygen-dependent FAD-linked oxidoreductase family.

Its pathway is mycotoxin biosynthesis. In terms of biological role, FAD-dependent monooxygenase; part of the gene cluster that mediates the biosynthesis of cercosporin, a light-activated, non-host-selective toxin. The perylenequinone chromophore of cercosporin absorbs light energy to attain an electronically-activated triplet state and produces active oxygen species such as the hydroxyl radical, superoxide, hydrogen peroxide or singlet oxygen upon reaction with oxygen molecules. These reactive oxygen species cause damage to various cellular components including lipids, proteins and nucleic acids. The first step of cercosporin biosynthesis is performed by the polyketide synthase CTB1 which catalyzes the formation of nor-toralactone. The starter unit acyltransferase (SAT) domain of CTB1 initiates polyketide extension by the selective utilization of acetyl-CoA, which is elongated to the heptaketide in the beta-ketoacyl synthase (KS) domain by successive condensations with six malonyl units introduced by the malonyl acyltransferase (MAT) domain. The product template (PT) domain catalyzes C4-C9 and C2-C11 aldol cyclizations and dehydrations to a trihydroxynaphthalene, which is thought to be delivered to the thioesterase (TE) domain for product release. The bifunctional enzyme CTB3 then methylates nor-toralactone to toralactone before conducting an unusual oxidative aromatic ring opening. The O-methyltransferase CTB2 further methylates the nascent OH-6 of the CBT3 product, blocking further oxidation at this site before the reductase CTB6 reduces the 2-oxopropyl ketone at position C7, giving naphthalene. The FAD-dependent monooxygenase CTB5 in concert with the multicopper oxidase CTB12 are responsible for homodimerization of naphthalene with CTB7 installing the dioxepine moiety, finally producing cercosporin. The fasciclin domain-containing protein CTB11 might act with CTB5 and CTB12 whereas the roles of CTB9 and CTB10 have still to be elucidated. In Cercospora beticola (Sugarbeet leaf spot fungus), this protein is FAD-dependent monooxygenase CTB5.